The sequence spans 382 residues: UDP-4-amino-4-deoxy-L-arabinose--oxoglutarate aminotransferase (382 aa).

K183 is modified (N6-(pyridoxal phosphate)lysine).

The protein belongs to the DegT/DnrJ/EryC1 family. ArnB subfamily. In terms of assembly, homodimer. Pyridoxal 5'-phosphate serves as cofactor.

The catalysed reaction is UDP-4-amino-4-deoxy-beta-L-arabinose + 2-oxoglutarate = UDP-beta-L-threo-pentopyranos-4-ulose + L-glutamate. It participates in nucleotide-sugar biosynthesis; UDP-4-deoxy-4-formamido-beta-L-arabinose biosynthesis; UDP-4-deoxy-4-formamido-beta-L-arabinose from UDP-alpha-D-glucuronate: step 2/3. The protein operates within bacterial outer membrane biogenesis; lipopolysaccharide biosynthesis. Its function is as follows. Catalyzes the conversion of UDP-4-keto-arabinose (UDP-Ara4O) to UDP-4-amino-4-deoxy-L-arabinose (UDP-L-Ara4N). The modified arabinose is attached to lipid A and is required for resistance to polymyxin and cationic antimicrobial peptides. This is UDP-4-amino-4-deoxy-L-arabinose--oxoglutarate aminotransferase from Pseudomonas fluorescens (strain Pf0-1).